Here is a 174-residue protein sequence, read N- to C-terminus: Small ribosomal subunit protein uS5 (174 aa).

Positions 18-81 (WQERVIQIRR…ADGKKHLIDI (64 aa)) constitute an S5 DRBM domain.

Belongs to the universal ribosomal protein uS5 family. Part of the 30S ribosomal subunit. Contacts proteins S4 and S8.

Functionally, with S4 and S12 plays an important role in translational accuracy. Located at the back of the 30S subunit body where it stabilizes the conformation of the head with respect to the body. This chain is Small ribosomal subunit protein uS5, found in Trichormus variabilis (strain ATCC 29413 / PCC 7937) (Anabaena variabilis).